A 99-amino-acid polypeptide reads, in one-letter code: Nucleoid-associated protein EbfC (99 aa).

This sequence belongs to the YbaB/EbfC family. In terms of assembly, homodimer.

The protein localises to the cytoplasm. It is found in the nucleoid. Functionally, binds to DNA and alters its conformation. May be involved in regulation of gene expression, nucleoid organization and DNA protection. The chain is Nucleoid-associated protein EbfC from Borrelia hermsii (strain HS1 / DAH).